The primary structure comprises 436 residues: Methyl-accepting chemotaxis protein Amb0994 (436 aa).

Residues 1–8 lie on the Cytoplasmic side of the membrane; the sequence is METTLGSY. The helical transmembrane segment at 9–29 threads the bilayer; the sequence is ARTLSLGMLVPSAICLLAGTF. A topological domain (periplasmic) is located at residue Gly30. A helical membrane pass occupies residues 31-51; it reads LLGGSSIALWVVIAVSLLGVV. The Cytoplasmic portion of the chain corresponds to 52–436; sequence GGVKIGGSAR…DGFIARIGGR (385 aa). Positions 180-416 constitute a Methyl-accepting transducer domain; it reads AATELEASSG…QVADAASELS (237 aa). Gln211 bears the Glutamate methyl ester (Gln) mark. Glu225 bears the Glutamate methyl ester (Glu) mark. Residues 321–436 are required for interaction with MamK and to respond to the magnetic field; it reads TEDITSQVAH…DGFIARIGGR (116 aa).

The protein belongs to the methyl-accepting chemotaxis (MCP) protein family. Interacts with MamK at cell poles and septa.

The protein localises to the cell inner membrane. Functionally, probable methyl-accepting taxis protein. May be the receptor that senses the torque generated from the interaction between the magnetosome dipole moment and the external magnetic field. Overproduction interferes with magnetotaxis, cells respond more slowly to changes in the magnetic field; requires the MamK-interacting C-terminus of the protein. The effect of magnetic sensing is to control flagellar rotation. In terms of biological role, chemotactic-signal transducers respond to changes in the concentration of attractants and repellents in the environment, transduce a signal from the outside to the inside of the cell, and facilitate sensory adaptation through variation of methylation levels. Attractants increase the level of methylation while repellents decrease the level of methylation. This chain is Methyl-accepting chemotaxis protein Amb0994, found in Paramagnetospirillum magneticum (strain ATCC 700264 / AMB-1) (Magnetospirillum magneticum).